The primary structure comprises 317 residues: Trem-like transcript 1 protein (317 aa).

The first 20 residues, 1-20, serve as a signal peptide directing secretion; that stretch reads MDCYLLLLLLLLGLAGQGSA. Positions 21–122 constitute an Ig-like V-type domain; the sequence is DSHPEVLQAP…PQTLHRVSLL (102 aa). At 21–175 the chain is on the extracellular side; that stretch reads DSHPEVLQAP…EFRRRENSIP (155 aa). 2 disulfide bridges follow: Cys39–Cys105 and Cys53–Cys60. A disordered region spans residues 147–166; sequence TGSLLEDPSLDPSASAGPHE. A helical membrane pass occupies residues 176–196; it reads LIWGAVLLLALVVVAVVIFAV. At 197–317 the chain is on the cytoplasmic side; that stretch reads MARKKGNRLV…PPNSQTPPSK (121 aa). Cys208 is lipidated: S-palmitoyl cysteine. Residues 212–278 are disordered; sequence QSTGVPGMDP…SQPPLPPKVL (67 aa). A compositionally biased stretch (pro residues) spans 261–275; it reads SSEPPAPPSQPPLPP. At Ser283 the chain carries Phosphoserine. Residues 284–289 carry the ITIM motif; sequence VTYATV. Residues 295–317 form a disordered region; it reads DKGKIASCEPVQDPPNSQTPPSK. Residues 308–317 are compositionally biased toward polar residues; that stretch reads PPNSQTPPSK.

When phosphorylated, interacts with PTPN11. When phosphorylated, interacts with PTPN6. In terms of processing, phosphorylated on tyrosine residues. As to expression, highly expressed in bone marrow leukocytes, splenic megakaryocytes and platelets. Detected in brain, liver and in peritoneal monocytes.

Its subcellular location is the cell membrane. The protein localises to the cytoplasm. In terms of biological role, cell surface receptor that may play a role in the innate and adaptive immune response. The chain is Trem-like transcript 1 protein (Treml1) from Mus musculus (Mouse).